Here is a 464-residue protein sequence, read N- to C-terminus: Cysteine--tRNA ligase (464 aa).

Residue cysteine 28 participates in Zn(2+) binding. A 'HIGH' region motif is present at residues proline 30–asparagine 40. Residues cysteine 212, histidine 237, and glutamate 241 each contribute to the Zn(2+) site. Residues lysine 270–serine 274 carry the 'KMSKS' region motif. Lysine 273 provides a ligand contact to ATP.

The protein belongs to the class-I aminoacyl-tRNA synthetase family. Monomer. It depends on Zn(2+) as a cofactor.

Its subcellular location is the cytoplasm. It catalyses the reaction tRNA(Cys) + L-cysteine + ATP = L-cysteinyl-tRNA(Cys) + AMP + diphosphate. The sequence is that of Cysteine--tRNA ligase from Wolbachia pipientis subsp. Culex pipiens (strain wPip).